We begin with the raw amino-acid sequence, 309 residues long: Tagatose-6-phosphate kinase (309 aa).

The protein belongs to the carbohydrate kinase PfkB family. LacC subfamily.

It carries out the reaction D-tagatofuranose 6-phosphate + ATP = D-tagatofuranose 1,6-bisphosphate + ADP + H(+). It participates in carbohydrate metabolism; D-tagatose 6-phosphate degradation; D-glyceraldehyde 3-phosphate and glycerone phosphate from D-tagatose 6-phosphate: step 1/2. This chain is Tagatose-6-phosphate kinase, found in Streptococcus pyogenes serotype M18 (strain MGAS8232).